The primary structure comprises 589 residues: Heterogeneous nuclear ribonucleoprotein L (589 aa).

Basic residues predominate over residues 1-16 (MSRRLLPRAEKRRRRL). The interval 1–100 (MSRRLLPRAE…NYDDPHKTPA (100 aa)) is disordered. Positions 17–27 (EQRQQPDEQRR) are enriched in basic and acidic residues. Residues 38 to 54 (AGGGGGGGRYYGGGSEG) are compositionally biased toward gly residues. S52 carries the phosphoserine modification. Glycyl lysine isopeptide (Lys-Gly) (interchain with G-Cter in SUMO2) cross-links involve residues K59 and K62. The span at 69–90 (QHGGGGGGGGGAGAAGGGGGGE) shows a compositional bias: gly residues. S101 carries the post-translational modification Phosphoserine. An RRM 1 domain is found at 102-176 (PVVHIRGLID…HPAFVNYSTS (75 aa)). K136 participates in a covalent cross-link: Glycyl lysine isopeptide (Lys-Gly) (interchain with G-Cter in SUMO2). The residue at position 185 (S185) is a Phosphoserine. Residues 193-270 (SVLLFTILNP…CTLKIEYAKP (78 aa)) form the RRM 2 domain. N6-acetyllysine is present on K269. The segment covering 284-301 (DYTNPNLSGQGDPGSNPN) has biased composition (polar residues). Positions 284-378 (DYTNPNLSGQ…PPPPPEYGPH (95 aa)) are disordered. Phosphoserine is present on residues S291 and S298. K302 is covalently cross-linked (Glycyl lysine isopeptide (Lys-Gly) (interchain with G-Cter in SUMO2)). R354 and R358 each carry asymmetric dimethylarginine. Over residues 364–375 (GHPPPPPPPPEY) the composition is skewed to pro residues. S381 carries the phosphoserine modification. RRM domains are found at residues 382–478 (PVLM…KDFS) and 495–583 (RIQH…LCFS). Phosphoserine; by CaMK4 is present on S544. A Glycyl lysine isopeptide (Lys-Gly) (interchain with G-Cter in SUMO2) cross-link involves residue K568.

In terms of assembly, identified in a IGF2BP1-dependent mRNP granule complex containing untranslated mRNAs. Interacts with HNRNPLL. Interacts with APEX1; the interaction is DNA-dependent. Component of a complex with SETD2. Interacts with ELAVL1. Part of a transcription inhibitory ribonucleoprotein complex composed at least of the circular RNA circZNF827, ZNF827 and HNRNPK. Interacts with CHD8 in an RNA-dependent manner. Several isoelectric forms of the L protein are probably the results of post-translational modifications. In terms of processing, phosphorylation at Ser-544 by CaMK4 enhances interaction with a CaMK4-responsive RNA element (CaRRE1), and prevents inclusion of the stress axis-regulated exon (STREX) of the KCNMA1 potassium channel transcripts upon membrane depolarization.

The protein resides in the nucleus. Its subcellular location is the nucleoplasm. It localises to the cytoplasm. Splicing factor binding to exonic or intronic sites and acting as either an activator or repressor of exon inclusion. Exhibits a binding preference for CA-rich elements. Component of the heterogeneous nuclear ribonucleoprotein (hnRNP) complexes and associated with most nascent transcripts. Associates, together with APEX1, to the negative calcium responsive element (nCaRE) B2 of the APEX2 promoter. As part of a ribonucleoprotein complex composed at least of ZNF827, HNRNPK and the circular RNA circZNF827 that nucleates the complex on chromatin, may negatively regulate the transcription of genes involved in neuronal differentiation. Regulates alternative splicing of a core group of genes involved in neuronal differentiation, likely by mediating H3K36me3-coupled transcription elongation and co-transcriptional RNA processing via interaction with CHD8. This Homo sapiens (Human) protein is Heterogeneous nuclear ribonucleoprotein L (HNRNPL).